Here is a 333-residue protein sequence, read N- to C-terminus: MLKLIQNNREITALIAILCLFGLLSVIDHQYFSLQTVTLVFSSAQILILLAMGATLVMLTRNIDVSVGSIAGLCAVIMGMSLNAGFSLSVSCLLTLLLGMCAGFFNGALVTWLKIPAIVTTLGTLGLYRGLMLLLTDGKWIEGLPDELKRLSAPLWLNISPIGWLLMILILAMAWILAKTPFGRSFYATGDNLQGARQLGVRTDSIQIIAFSVNGVMAALAGIVFASQIGFIPNQTGSGLEMRAIAACVLGGISLLGGTGTVIGAILGAFFLTQINSGLVLLKLPAWWNDFIAGFVLLAVLIFDGRLRCAIEKNIRQQKYARFLKNDKSNQVT.

The next 9 membrane-spanning stretches (helical) occupy residues 14 to 34, 39 to 59, 70 to 90, 93 to 113, 115 to 135, 157 to 177, 206 to 226, 252 to 272, and 284 to 304; these read LIAI…YFSL, LVFS…LVML, IAGL…SLSV, LLTL…VTWL, IPAI…MLLL, LNIS…AWIL, IQII…IVFA, GISL…AFFL, and LPAW…LIFD.

This sequence belongs to the binding-protein-dependent transport system permease family. AraH/RbsC subfamily. In terms of assembly, the complex is composed of two ATP-binding proteins (LsrA), two transmembrane proteins (LsrC and LsrD) and a solute-binding protein (LsrB).

It is found in the cell inner membrane. In terms of biological role, part of the ABC transporter complex LsrABCD involved in autoinducer 2 (AI-2) import. Probably responsible for the translocation of the substrate across the membrane. The polypeptide is Autoinducer 2 import system permease protein LsrC (lsrC) (Photorhabdus laumondii subsp. laumondii (strain DSM 15139 / CIP 105565 / TT01) (Photorhabdus luminescens subsp. laumondii)).